Consider the following 571-residue polypeptide: Serine/threonine-protein kinase Nek7 (571 aa).

Residues 19-277 (YHVVEQVRRG…LRNPSLQPYL (259 aa)) enclose the Protein kinase domain. ATP is bound by residues 25-33 (VRRGKSSSD) and Lys48. The active-site Proton acceptor is Asp144. Disordered stretches follow at residues 298–321 (SPKD…SREK) and 338–363 (TETG…ETKR). The span at 312 to 321 (FGKERVSREK) shows a compositional bias: basic and acidic residues. Over residues 342 to 351 (SSSSSQPASS) the composition is skewed to low complexity.

It belongs to the protein kinase superfamily. NEK Ser/Thr protein kinase family. NIMA subfamily.

The catalysed reaction is L-seryl-[protein] + ATP = O-phospho-L-seryl-[protein] + ADP + H(+). It carries out the reaction L-threonyl-[protein] + ATP = O-phospho-L-threonyl-[protein] + ADP + H(+). Its function is as follows. May be involved in plant development processes. In Arabidopsis thaliana (Mouse-ear cress), this protein is Serine/threonine-protein kinase Nek7 (NEK7).